The chain runs to 87 residues: HssA/B-like protein 58 (87 aa).

Polar residues predominate over residues 1-13 (MTILSAITSISRP). The disordered stretch occupies residues 1–31 (MTILSAITSISRPNKSSKSVISSNGGSSLSM). Residues 14-31 (NKSSKSVISSNGGSSLSM) are compositionally biased toward low complexity.

It belongs to the hssA/B family.

This Dictyostelium discoideum (Social amoeba) protein is HssA/B-like protein 58 (hssl58).